The sequence spans 570 residues: Urease subunit alpha (570 aa).

Residues 131-570 form the Urease domain; it reads GGFDAHIHFI…LPMAQRYFLF (440 aa). Positions 136, 138, and 219 each coordinate Ni(2+). N6-carboxylysine is present on K219. H221 is a binding site for substrate. Residues H248 and H274 each contribute to the Ni(2+) site. The active-site Proton donor is H322. Position 362 (D362) interacts with Ni(2+).

It belongs to the metallo-dependent hydrolases superfamily. Urease alpha subunit family. In terms of assembly, heterotrimer of UreA (gamma), UreB (beta) and UreC (alpha) subunits. Three heterotrimers associate to form the active enzyme. Requires Ni cation as cofactor. In terms of processing, carboxylation allows a single lysine to coordinate two nickel ions.

The protein localises to the cytoplasm. It carries out the reaction urea + 2 H2O + H(+) = hydrogencarbonate + 2 NH4(+). Its pathway is nitrogen metabolism; urea degradation; CO(2) and NH(3) from urea (urease route): step 1/1. This is Urease subunit alpha from Mesorhizobium japonicum (strain LMG 29417 / CECT 9101 / MAFF 303099) (Mesorhizobium loti (strain MAFF 303099)).